Consider the following 98-residue polypeptide: Putative pterin-4-alpha-carbinolamine dehydratase (98 aa).

It belongs to the pterin-4-alpha-carbinolamine dehydratase family.

It catalyses the reaction (4aS,6R)-4a-hydroxy-L-erythro-5,6,7,8-tetrahydrobiopterin = (6R)-L-erythro-6,7-dihydrobiopterin + H2O. The sequence is that of Putative pterin-4-alpha-carbinolamine dehydratase from Jannaschia sp. (strain CCS1).